Reading from the N-terminus, the 306-residue chain is D-alanine--D-alanine ligase (306 aa).

Residues 106–301 (KLLWQSAGIN…FEELVLKILG (196 aa)) enclose the ATP-grasp domain. 132 to 187 (AKELGLPLIVKPSREGSTIGLSKVREAGEVAAAWHLAARHDAMVLAEQFIEGTELT) serves as a coordination point for ATP. Residues Asp-255, Glu-268, and Asn-270 each coordinate Mg(2+).

The protein belongs to the D-alanine--D-alanine ligase family. Requires Mg(2+) as cofactor. Mn(2+) is required as a cofactor.

It localises to the cytoplasm. The catalysed reaction is 2 D-alanine + ATP = D-alanyl-D-alanine + ADP + phosphate + H(+). The protein operates within cell wall biogenesis; peptidoglycan biosynthesis. Cell wall formation. The polypeptide is D-alanine--D-alanine ligase (Nitrosospira multiformis (strain ATCC 25196 / NCIMB 11849 / C 71)).